Reading from the N-terminus, the 725-residue chain is Catalase-peroxidase (725 aa).

The tryptophyl-tyrosyl-methioninium (Trp-Tyr) (with M-253) cross-link spans 99–227 (WHAAGTYRIA…LAAVMMGLIY (129 aa)). Histidine 100 functions as the Proton acceptor in the catalytic mechanism. Positions 227–253 (YVNPEGVDGNPDPLKTAHDIRITFSRM) form a cross-link, tryptophyl-tyrosyl-methioninium (Tyr-Met) (with W-99). Histidine 268 provides a ligand contact to heme b.

It belongs to the peroxidase family. Peroxidase/catalase subfamily. In terms of assembly, homodimer or homotetramer. Requires heme b as cofactor. Post-translationally, formation of the three residue Trp-Tyr-Met cross-link is important for the catalase, but not the peroxidase activity of the enzyme.

It catalyses the reaction H2O2 + AH2 = A + 2 H2O. The enzyme catalyses 2 H2O2 = O2 + 2 H2O. Functionally, bifunctional enzyme with both catalase and broad-spectrum peroxidase activity. In Picosynechococcus sp. (strain ATCC 27264 / PCC 7002 / PR-6) (Agmenellum quadruplicatum), this protein is Catalase-peroxidase.